Consider the following 345-residue polypeptide: NADPH-dependent oxidoreductase 2-alkenal reductase (345 aa).

Residues 52–53 (PY), 163–169 (AASGAVG), Gly188, Lys192, Tyr208, Asn232, Cys254, Tyr260, 284–286 (FVV), Phe330, and 334–336 (NVG) contribute to the NADP(+) site. Position 53 (Tyr53) interacts with substrate. A substrate-binding site is contributed by Tyr260.

This sequence belongs to the NADP-dependent oxidoreductase L4BD family. In terms of assembly, homodimer. In terms of tissue distribution, expressed in leaves.

Its subcellular location is the cytoplasm. It localises to the nucleus. The protein localises to the nucleoplasm. It catalyses the reaction an n-alkanal + NAD(+) = an alk-2-enal + NADH + H(+). The enzyme catalyses an n-alkanal + NADP(+) = an alk-2-enal + NADPH + H(+). With respect to regulation, inhibited by N-ethylmaleimide and p-chloromercuribenzoic acid. Functionally, involved in the detoxification of reactive carbonyls. Acts on lipid peroxide-derived reactive aldehydes. Specific to a double bond activated by an adjacent carbonyl group. Can use both quinones and diamide as substrates, but not menadione, ferricyanide or phylloquinone. Can use 4-hydroxy-(2E)-nonenal (HNE), 4-hydroxy-(2E)-hexenal (HHE), (2E)-nonenal, (2E)-hexenal, (2E)-pentenal, propenal (acrolein), 3-buten-2-one and 3-penten-2-one, but not (R)-(-)-carvone, n-nonanal, n-hexanal, (3Z)-hexanal, cyclohex-2-en-1-one or 12-oxo phytodienoic acid (OPDA) as electron acceptors. Catalyzes the reduction of the alpha,beta-unsaturated bond of 2-alkenals, of lipid peroxide-derived oxenes 9-oxo-10(E),12(Z)-octadecadienoic acid (9-KODE) and 13-oxo-9(Z),11(E)-octadecadienoic acid (13-KODE), as well as 4-oxo-(2E)-nonenal and 4-hydroxynonenal. Can use 12-oxo-10(E) dodecanoate (traumatin), trans-1,3 diphenyl-2-propenone, trans-1,4-diphenyl-2-butene-1,4-dione, 9-oxo-12,13-epoxy-(10E)-octadecenoic acid (trans-EKODE-1b) and 9,13-dihydroxy-10-oxo-11-octadecenoic acid as substrates. Catalyzes the reduction of the 7-8 double bond of phenylpropanal substrates, such as p-coumaryl aldehyde and coniferyl aldehyde (in vitro). Has activity towards toxic substrates, such as 4-hydroxy-(2E)-nonenal (in vitro). May play a distinct role in plant antioxidant defense and is possibly involved in NAD(P)/NAD(P)H homeostasis. The polypeptide is NADPH-dependent oxidoreductase 2-alkenal reductase (Arabidopsis thaliana (Mouse-ear cress)).